The chain runs to 333 residues: NADH dehydrogenase (ubiquinone) complex I, assembly factor 6 (333 aa).

A mitochondrion-targeting transit peptide spans Met1 to Arg44.

The protein belongs to the NDUFAF6 family.

It localises to the mitochondrion inner membrane. In terms of biological role, involved in the assembly of mitochondrial NADH:ubiquinone oxidoreductase complex (complex I) at early stages. May play a role in the biogenesis of complex I subunit MT-ND1. This chain is NADH dehydrogenase (ubiquinone) complex I, assembly factor 6 (Ndufaf6), found in Mus musculus (Mouse).